The following is a 166-amino-acid chain: Biotin carboxyl carrier protein of acetyl-CoA carboxylase (166 aa).

Residues Ser61 to Ala70 are compositionally biased toward polar residues. A disordered region spans residues Ser61–Gln82. The Biotinyl-binding domain maps to Gly90 to Lys166. N6-biotinyllysine is present on Lys132.

Homodimer.

It functions in the pathway lipid metabolism; fatty acid biosynthesis. In terms of biological role, this protein is a component of the acetyl coenzyme A carboxylase complex; first, biotin carboxylase catalyzes the carboxylation of the carrier protein and then the transcarboxylase transfers the carboxyl group to form malonyl-CoA. The polypeptide is Biotin carboxyl carrier protein of acetyl-CoA carboxylase (Streptococcus pyogenes serotype M6 (strain ATCC BAA-946 / MGAS10394)).